Here is a 926-residue protein sequence, read N- to C-terminus: Alpha-L-rhamnosidase (926 aa).

The first 25 residues, 1-25, serve as a signal peptide directing secretion; it reads MILHKSVFKSYIYVLTYFVFFSVMS. A lipid anchor (N-palmitoyl cysteine) is attached at Cys-26. A lipid anchor (S-diacylglycerol cysteine) is attached at Cys-26. Alpha-L-rhamnose-binding positions include Asp-504, 508–510, Asp-517, and Trp-569; that span reads RDE. Residue Glu-510 is the Proton donor of the active site. The Proton acceptor role is filled by Glu-779. His-800 is a binding site for alpha-L-rhamnose.

Belongs to the glycosyl hydrolase 78 family.

The protein resides in the cell membrane. It catalyses the reaction Hydrolysis of terminal non-reducing alpha-L-rhamnose residues in alpha-L-rhamnosides.. Its function is as follows. Alpha-L-rhamnosidase involved in ulvan degradation. Ulvan is the main polysaccharide component of the Ulvales (green seaweed) cell wall. It is composed of disaccharide building blocks comprising 3-sulfated rhamnose (Rha3S) linked to D-glucuronic acid (GlcA), L-iduronic acid (IduA), or D-xylose (Xyl). Alpha-L-rhamnosidase converts Rha-Xyl-Rha3S, the product of a sulfatase acting on Rha3S-Xyl-Rha3S oligosaccharides, to Rha and Xyl-Rha3S. The enzyme is able to degrade p-nitrophenyl-alpha-L-rhamnopyranoside (PNP-Rha) in vitro. The chain is Alpha-L-rhamnosidase from Formosa agariphila (strain DSM 15362 / KCTC 12365 / LMG 23005 / KMM 3901 / M-2Alg 35-1).